The chain runs to 449 residues: Trigger factor (449 aa).

Positions 173–258 (GDRVTVDFVG…LKKVEWPHLP (86 aa)) constitute a PPIase FKBP-type domain.

It belongs to the FKBP-type PPIase family. Tig subfamily.

Its subcellular location is the cytoplasm. It catalyses the reaction [protein]-peptidylproline (omega=180) = [protein]-peptidylproline (omega=0). Its function is as follows. Involved in protein export. Acts as a chaperone by maintaining the newly synthesized protein in an open conformation. Functions as a peptidyl-prolyl cis-trans isomerase. The polypeptide is Trigger factor (Burkholderia pseudomallei (strain 1710b)).